A 381-amino-acid polypeptide reads, in one-letter code: MPAVNLGMPKVPEVLAPRRKTRQISVGKVKVGGNAQVSVQSMTTTQTTNINATLQQIAELTATGCDIVRVAVPHQDDADVLHILAKKSQIPIIADIHFQPRYVFTAIDAGVGAVRVNPGNIRKFDDQVGAIAKAAKAAGVSIRIGVNAGSLHPSLLQKYGKATPEALVESAVWEASLFEEHDFHDFKISVKHNDPVIMVKAYRLLAERGDWPLHLGVTEAGPAFQGTIKSATAFGILLSEGIGDTIRVSLSAPPAEEVKVGLQILQSLNLRERKLEIVSCPSCGRAQVDVYSLAEQVTEGLKHVNVPLRVAVMGCVVNGPGEAREAELGVASGNGRGQIFVKGEVIKTVPEAEIVQTLIEEANRLAAEMPAGSIGSPEILV.

[4Fe-4S] cluster is bound by residues cysteine 280, cysteine 283, cysteine 315, and glutamate 322.

It belongs to the IspG family. [4Fe-4S] cluster serves as cofactor.

It catalyses the reaction (2E)-4-hydroxy-3-methylbut-2-enyl diphosphate + oxidized [flavodoxin] + H2O + 2 H(+) = 2-C-methyl-D-erythritol 2,4-cyclic diphosphate + reduced [flavodoxin]. The protein operates within isoprenoid biosynthesis; isopentenyl diphosphate biosynthesis via DXP pathway; isopentenyl diphosphate from 1-deoxy-D-xylulose 5-phosphate: step 5/6. In terms of biological role, converts 2C-methyl-D-erythritol 2,4-cyclodiphosphate (ME-2,4cPP) into 1-hydroxy-2-methyl-2-(E)-butenyl 4-diphosphate. This is 4-hydroxy-3-methylbut-2-en-1-yl diphosphate synthase (flavodoxin) from Clavibacter michiganensis subsp. michiganensis (strain NCPPB 382).